Consider the following 319-residue polypeptide: Zinc finger protein-like 1 homolog (319 aa).

The segment at 1–43 (MGLCKCPKRKVTNLFCYEHRVNVCEFCLVDNHPNCVVQSYLNW) adopts a B box-type; degenerate zinc-finger fold. The RING-type; atypical zinc-finger motif lies at 53 to 101 (CSLCHTTLTQGETIRLNCLHLLHWRCFDDWAASFPPTTAPAGYRCPCCS). A disordered region spans residues 212 to 232 (ESSSDTRPLLRQDRDADNEEN). Residues 219–232 (PLLRQDRDADNEEN) are compositionally biased toward basic and acidic residues. Residues 264–284 (KMAIFVMFLALLALITIITVL) traverse the membrane as a helical segment.

Belongs to the ZFPL1 family.

The protein localises to the membrane. The polypeptide is Zinc finger protein-like 1 homolog (Caenorhabditis briggsae).